Consider the following 1453-residue polypeptide: Chromatin remodeling regulator CECR2 (1453 aa).

A disordered region spans residues 170–237 (VQGRSNGELS…DLQTRNGSRG (68 aa)). A compositionally biased stretch (basic residues) spans 197–209 (TGKRRGRPPKRKK). A compositionally biased stretch (basic and acidic residues) spans 210–222 (LQEEIISSEKQEE). Residues 223–234 (NSLTSDLQTRNG) show a composition bias toward polar residues. S402 bears the Phosphoserine mark. Positions 414–518 (FELDDDFTAM…RCFHRAMTKH (105 aa)) constitute a Bromo domain. At T526 the chain carries Phosphothreonine. Disordered stretches follow at residues 536–667 (EKRE…HPPF), 767–796 (HGTT…TLGH), 827–868 (GYMQ…GESM), 884–1020 (VCPP…DNSY), 1046–1072 (VVGE…LCPR), 1131–1308 (LASM…YLYG), 1331–1368 (MLQT…VATQ), and 1396–1453 (QTGT…LDQS). A Phosphoserine modification is found at S551. A compositionally biased stretch (polar residues) spans 637–649 (GSLQGSDPTNLHG). Pro residues predominate over residues 655–664 (EAPPGEPLQH). The span at 887 to 905 (PGVPYHPRQPTPPQLPGPF) shows a compositional bias: pro residues. A Phosphoserine modification is found at S983. Residues 985–998 (QERETEDSQLKSDA) show a composition bias toward basic and acidic residues. Polar residues predominate over residues 999 to 1020 (SDSADTYKTSKNKNTWPLDNSY). 2 positions are modified to asymmetric dimethylarginine: R1166 and R1172. 2 stretches are compositionally biased toward low complexity: residues 1173 to 1187 (YSYQ…HPYQ) and 1202 to 1211 (QRSLPSQRSP). Residues 1228–1250 (NVLSSLQGCETLNTALTSPTQMD) show a composition bias toward polar residues. A compositionally biased stretch (basic and acidic residues) spans 1265-1289 (GPEEEKMDESVERPESPKEFLDLDN). S1280 is subject to Phosphoserine. Composition is skewed to polar residues over residues 1291–1304 (NAAT…STSD) and 1331–1346 (MLQT…SASH). Residues 1352–1364 (YPSPVPAHPPPHP) show a composition bias toward pro residues.

Component of the CERF-1 ISWI chromatin remodeling complex (also called the CECR2-containing remodeling factor (CERF) complex) at least composed of CECR2 and SMARCA1. Component of the CERF-5 ISWI chromatin remodeling complex at least composed of CECR2 and SMARCA5/SNF2H. LUZP1 is detected as part of the CERF-1 and CERF-5 complexes in embryonic stem (ES) cells where it is involved in complex stabilization but is not detected in the complexes in the testis. Interacts with CCAR2; CCAR2 may form part of the CERF-1 and/or CEF-5 ISWI chromatin remodeling complexes in ES cells. Interacts with acetylated lysine residues on histone H2A and H3 (in vitro). Interacts with LRPPRC.

The protein localises to the nucleus. In terms of biological role, regulatory subunit of the ATP-dependent CERF-1 and CERF-5 ISWI chromatin remodeling complexes, which form ordered nucleosome arrays on chromatin and facilitate access to DNA during DNA-templated processes such as DNA replication, transcription, and repair. The complexes do not have the ability to slide mononucleosomes to the center of a DNA template. The CERF-1 ISWI chromatin remodeling complex has a lower ATP hydrolysis rate than the CERF-5 ISWI chromatin remodeling complex. Plays a role in various processes during development: required during embryogenesis for neural tube closure and inner ear development. In adults, required for spermatogenesis, via the formation of ISWI-type chromatin complexes. In histone-modifying complexes, CECR2 recognizes and binds acylated histones: binds histones that are acetylated and/or butyrylated. May also be involved through its interaction with LRPPRC in the integration of cytoskeletal network with vesicular trafficking, nucleocytosolic shuttling, transcription, chromosome remodeling and cytokinesis. The protein is Chromatin remodeling regulator CECR2 of Mus musculus (Mouse).